A 426-amino-acid chain; its full sequence is Dihydroorotase (426 aa).

Zn(2+) contacts are provided by His-58 and His-60. Residues 60 to 62 (HLR) and Asn-92 contribute to the substrate site. Zn(2+) is bound by residues Asp-150, His-177, and His-230. Position 276 (Asn-276) interacts with substrate. Asp-303 contacts Zn(2+). Residue Asp-303 is part of the active site. Substrate is bound by residues His-307 and 321-322 (FG).

This sequence belongs to the metallo-dependent hydrolases superfamily. DHOase family. Class I DHOase subfamily. It depends on Zn(2+) as a cofactor.

The catalysed reaction is (S)-dihydroorotate + H2O = N-carbamoyl-L-aspartate + H(+). It functions in the pathway pyrimidine metabolism; UMP biosynthesis via de novo pathway; (S)-dihydroorotate from bicarbonate: step 3/3. Catalyzes the reversible cyclization of carbamoyl aspartate to dihydroorotate. The polypeptide is Dihydroorotase (Listeria monocytogenes serovar 1/2a (strain ATCC BAA-679 / EGD-e)).